We begin with the raw amino-acid sequence, 389 residues long: MSRTLILAEQLISRPSVTPEDAGCLELLAGRLAPLGFTCERMDSGPDSFRVSNLWARRAAAGGGAPARTLVFAGHTDVVPTGPPEQWSSPPFTPSHRDGRLYGRGASDMKTSIAAFVVAVEEFLAATPEPAIALAFLLTSDEEGPSVDGTKVVVEQLAARGETLDWCIVGEPTSVRKTGDMIKNGRRGTLSGKLTVRGIQGHIAYPQLARNPIHQALPALAELAATEWDRGNDFFPPTSWQISNIHGGTGATNVIPGTVVVDFNFRFCTESTAEGLKTRVHNLLDRHGLEYDLTWTLGGQPFLTTPGELVAAVQQAITDETGITTELSTTGGTSDGRFIARVCPQVIELGPPNATIHKIDEHVVIADVEPLKNIYRRTLERLNAQAAAA.

Zn(2+) is bound at residue histidine 75. The active site involves aspartate 77. Aspartate 108 lines the Zn(2+) pocket. The active-site Proton acceptor is the glutamate 142. Zn(2+) is bound by residues glutamate 143, glutamate 171, and histidine 357.

This sequence belongs to the peptidase M20A family. DapE subfamily. As to quaternary structure, homodimer. It depends on Zn(2+) as a cofactor. Requires Co(2+) as cofactor.

The catalysed reaction is N-succinyl-(2S,6S)-2,6-diaminopimelate + H2O = (2S,6S)-2,6-diaminopimelate + succinate. It functions in the pathway amino-acid biosynthesis; L-lysine biosynthesis via DAP pathway; LL-2,6-diaminopimelate from (S)-tetrahydrodipicolinate (succinylase route): step 3/3. Its function is as follows. Catalyzes the hydrolysis of N-succinyl-L,L-diaminopimelic acid (SDAP), forming succinate and LL-2,6-diaminopimelate (DAP), an intermediate involved in the bacterial biosynthesis of lysine and meso-diaminopimelic acid, an essential component of bacterial cell walls. The protein is Succinyl-diaminopimelate desuccinylase of Paracidovorax citrulli (strain AAC00-1) (Acidovorax citrulli).